A 232-amino-acid polypeptide reads, in one-letter code: Large ribosomal subunit protein uL1 (232 aa).

It belongs to the universal ribosomal protein uL1 family. As to quaternary structure, part of the 50S ribosomal subunit.

In terms of biological role, binds directly to 23S rRNA. The L1 stalk is quite mobile in the ribosome, and is involved in E site tRNA release. Its function is as follows. Protein L1 is also a translational repressor protein, it controls the translation of the L11 operon by binding to its mRNA. The sequence is that of Large ribosomal subunit protein uL1 from Chelativorans sp. (strain BNC1).